The following is a 264-amino-acid chain: Probable DNA polymerase sliding clamp 2 (264 aa).

A DNA-binding region spans residues 75 to 94 (SIAQEATVGIKISNFVRILD).

This sequence belongs to the PCNA family.

Sliding clamp subunit. Responsible for tethering the catalytic subunit of DNA polymerase to DNA during high-speed replication. This chain is Probable DNA polymerase sliding clamp 2, found in Paramecium bursaria Chlorella virus 1 (PBCV-1).